The following is a 159-amino-acid chain: Cell division protein SepF (159 aa).

The segment at Asp-23–Asn-69 is disordered. The segment covering Thr-44–Pro-64 has biased composition (low complexity).

It belongs to the SepF family. As to quaternary structure, homodimer. Interacts with FtsZ.

The protein localises to the cytoplasm. Cell division protein that is part of the divisome complex and is recruited early to the Z-ring. Probably stimulates Z-ring formation, perhaps through the cross-linking of FtsZ protofilaments. Its function overlaps with FtsA. The sequence is that of Cell division protein SepF from Bifidobacterium longum (strain DJO10A).